Consider the following 398-residue polypeptide: Vacuolar protease A (398 aa).

Residues 1-18 form the signal peptide; the sequence is MKSTSLLTASVLLGSASA. Residues 19–70 constitute a propeptide, activation peptide; that stretch reads AVHKLKLNKVPLDEQLYTHNIDAHVRALGQKYMGIRPNVHQELLEENSLNDM. Residues 85–395 form the Peptidase A1 domain; the sequence is YFSEISLGTP…DLGNNAVGLA (311 aa). D103 is an active-site residue. C116 and C121 are disulfide-bonded. N138 is a glycosylation site (N-linked (GlcNAc...) asparagine). D287 is an active-site residue. C321 and C354 are oxidised to a cystine. N-linked (GlcNAc...) asparagine glycosylation occurs at N338.

Belongs to the peptidase A1 family.

It localises to the vacuole lumen. Its subcellular location is the secreted. It carries out the reaction Hydrolysis of proteins with broad specificity for peptide bonds. Cleaves -Leu-Leu-|-Val-Tyr- bond in a synthetic substrate. Does not act on esters of Tyr or Arg.. Its function is as follows. Vacuolar aspartic endopeptidase which is probably also secreted and contributes to virulence. This is Vacuolar protease A (pep2) from Aspergillus fumigatus (strain ATCC MYA-4609 / CBS 101355 / FGSC A1100 / Af293) (Neosartorya fumigata).